A 63-amino-acid chain; its full sequence is Phylloseptin-Az1 (63 aa).

Positions 1–19 (LKKSLFLVVFLGLATLSIC) are cleaved as a signal peptide. Positions 20-41 (EEEKRETEEEEYNQGEDDKSEE) are excised as a propeptide. Phenylalanine amide is present on Phe62.

As to expression, expressed by the skin glands.

It localises to the secreted. Functionally, has antimicrobial activity. This is Phylloseptin-Az1 from Pithecopus azureus (Orange-legged monkey tree frog).